The sequence spans 107 residues: Nucleoid-associated protein Hhal_0231 (107 aa).

2 disordered regions span residues 1 to 24 and 82 to 107; these read MKGGLGNIMKQAQKMQEDMQKAQE and VQRESQERMSGMAEGMGLPPGMKLPF. The span at 15–24 shows a compositional bias: basic and acidic residues; it reads MQEDMQKAQE.

Belongs to the YbaB/EbfC family. Homodimer.

It localises to the cytoplasm. It is found in the nucleoid. Binds to DNA and alters its conformation. May be involved in regulation of gene expression, nucleoid organization and DNA protection. This chain is Nucleoid-associated protein Hhal_0231, found in Halorhodospira halophila (strain DSM 244 / SL1) (Ectothiorhodospira halophila (strain DSM 244 / SL1)).